Consider the following 67-residue polypeptide: Envelope small membrane protein (67 aa).

The N-myristoyl glycine; by host moiety is linked to residue G2. An endoplasmic reticulum retention signal region spans residues 2 to 15 (GLVWSLISNSIQTI). Residues 2 to 27 (GLVWSLISNSIQTIIADFAISVIDAA) are Virion surface-facing. The helical transmembrane segment at 28-48 (LFFLMLLALAVVTVFLFWLIV) threads the bilayer. The Intravirion segment spans residues 49 to 67 (AIGRSLVARCSRGARYRPV).

This sequence belongs to the arteriviridae E protein family. Homomultimer. Associates with itself into higher-order structures, including dimers, trimers and tetramers. Associates with the GP2b-GP3-GP4 complex. Myristoylated. In terms of processing, not glycosylated.

Its subcellular location is the virion membrane. It is found in the host endoplasmic reticulum membrane. It localises to the host Golgi apparatus membrane. The protein localises to the secreted. Functionally, minor envelope protein. May function as a viroporin in the virion envelope that facilitates uncoating of the virus in order to release the genomic RNA into the cytoplasm for subsequent replication. The sequence is that of Envelope small membrane protein (GP2a) from Equidae (horses).